A 493-amino-acid chain; its full sequence is Alpha-amylase-related protein (493 aa).

The N-terminal stretch at 1–19 is a signal peptide; the sequence is MFKLALTLTLCLAGSLSLA. Gln-20 carries the post-translational modification Pyrrolidone carboxylic acid. The cysteines at positions 47 and 103 are disulfide-linked. Positions 117, 168, and 177 each coordinate Ca(2+). The cysteines at positions 156 and 170 are disulfide-linked. Residue Arg-205 coordinates chloride. The active-site Nucleophile is Asp-207. Position 211 (His-211) interacts with Ca(2+). Glu-244 acts as the Proton donor in catalysis. Positions 307 and 342 each coordinate chloride. 3 disulfides stabilise this stretch: Cys-375–Cys-381, Cys-417–Cys-440, and Cys-447–Cys-459.

The protein belongs to the glycosyl hydrolase 13 family. In terms of assembly, monomer. Ca(2+) is required as a cofactor. It depends on chloride as a cofactor.

Its subcellular location is the secreted. It carries out the reaction Endohydrolysis of (1-&gt;4)-alpha-D-glucosidic linkages in polysaccharides containing three or more (1-&gt;4)-alpha-linked D-glucose units.. The chain is Alpha-amylase-related protein (Amyrel) from Drosophila yakuba (Fruit fly).